A 105-amino-acid polypeptide reads, in one-letter code: Phosphoribosyl-ATP pyrophosphatase (105 aa).

The protein belongs to the PRA-PH family.

Its subcellular location is the cytoplasm. The enzyme catalyses 1-(5-phospho-beta-D-ribosyl)-ATP + H2O = 1-(5-phospho-beta-D-ribosyl)-5'-AMP + diphosphate + H(+). The protein operates within amino-acid biosynthesis; L-histidine biosynthesis; L-histidine from 5-phospho-alpha-D-ribose 1-diphosphate: step 2/9. The polypeptide is Phosphoribosyl-ATP pyrophosphatase (Ruthia magnifica subsp. Calyptogena magnifica).